Reading from the N-terminus, the 1045-residue chain is Elongation factor 3 (1045 aa).

ADP is bound by residues I42, H44, and S83. HEAT repeat units lie at residues 86–123 (PYVV…AVNP), 125–162 (AVKA…QAKS), 166–203 (LRMT…TVEN), 171–209 (LIPV…IERF), 205–241 (DIER…EVTP), 242–279 (ATLS…LVED), and 285–323 (PFLN…VGAV). The ADP site is built by T392 and H396. ABC transporter domains are found at residues 426–641 (EEGE…YYEL) and 667–993 (VKVS…KKED). 4 residues coordinate ADP: N703, E922, N925, and H951. A disordered region spans residues 975-1045 (GHNWVSGQGS…AYVSDDDADF (71 aa)). Residues 1020 to 1031 (RKKKKERMKKKK) show a composition bias toward basic residues.

The protein belongs to the ABC transporter superfamily. ABCF family. EF3 subfamily.

Its subcellular location is the cytoplasm. The protein localises to the cytosol. The enzyme catalyses ATP + H2O = ADP + phosphate + H(+). Its pathway is protein biosynthesis; polypeptide chain elongation. Its function is as follows. Ribosome-dependent ATPase that functions in cytoplasmic translation elongation. Required for the ATP-dependent release of deacylated tRNA from the ribosomal E-site during protein biosynthesis. Stimulates the eEF1A-dependent binding of aminoacyl-tRNA to the ribosomal A-site, which has reduced affinity for tRNA as long as the E-site is occupied. Assists translation termination by stimulating the release of nascent protein from the ribosome by release factors. The polypeptide is Elongation factor 3 (Zygosaccharomyces rouxii (strain ATCC 2623 / CBS 732 / NBRC 1130 / NCYC 568 / NRRL Y-229)).